The chain runs to 53 residues: UPF0391 membrane protein BURPS1106A_A2993 (53 aa).

2 consecutive transmembrane segments (helical) span residues 5–25 (ALIF…GIAA) and 30–50 (IAKI…VLGV).

The protein belongs to the UPF0391 family.

The protein localises to the cell membrane. This is UPF0391 membrane protein BURPS1106A_A2993 from Burkholderia pseudomallei (strain 1106a).